The sequence spans 288 residues: ATP synthase gamma chain (288 aa).

The protein belongs to the ATPase gamma chain family. In terms of assembly, F-type ATPases have 2 components, CF(1) - the catalytic core - and CF(0) - the membrane proton channel. CF(1) has five subunits: alpha(3), beta(3), gamma(1), delta(1), epsilon(1). CF(0) has three main subunits: a, b and c.

The protein resides in the cell inner membrane. In terms of biological role, produces ATP from ADP in the presence of a proton gradient across the membrane. The gamma chain is believed to be important in regulating ATPase activity and the flow of protons through the CF(0) complex. The protein is ATP synthase gamma chain of Chromobacterium violaceum (strain ATCC 12472 / DSM 30191 / JCM 1249 / CCUG 213 / NBRC 12614 / NCIMB 9131 / NCTC 9757 / MK).